The sequence spans 75 residues: Sec-independent protein translocase protein TatA (75 aa).

Residues 1–21 (MGMPSMPELLIVLAIVVLLFG) form a helical membrane-spanning segment. Positions 47–75 (DEEEEVKEITKKEEPKVEAAAEEKKSENA) are disordered. The segment covering 53 to 75 (KEITKKEEPKVEAAAEEKKSENA) has biased composition (basic and acidic residues).

It belongs to the TatA/E family. In terms of assembly, the Tat system comprises two distinct complexes: a TatABC complex, containing multiple copies of TatA, TatB and TatC subunits, and a separate TatA complex, containing only TatA subunits. Substrates initially bind to the TatABC complex, which probably triggers association of the separate TatA complex to form the active translocon.

Its subcellular location is the cell inner membrane. Functionally, part of the twin-arginine translocation (Tat) system that transports large folded proteins containing a characteristic twin-arginine motif in their signal peptide across membranes. TatA could form the protein-conducting channel of the Tat system. In Sulfurovum sp. (strain NBC37-1), this protein is Sec-independent protein translocase protein TatA.